A 182-amino-acid polypeptide reads, in one-letter code: Adenylate kinase (182 aa).

ATP is bound at residue 12 to 17; the sequence is GAGKGT. An NMP region spans residues 32–61; sequence STGDLLRDEVSSGSVLGIKAAEIMNKGELV. AMP is bound by residues threonine 33, arginine 38, 59-61, 85-88, and glutamine 92; these read ELV and GFPR. The tract at residues 126 to 132 is LID; the sequence is ERGRQDD. Residue arginine 127 participates in ATP binding. AMP is bound by residues arginine 129 and arginine 140. Alanine 168 serves as a coordination point for ATP.

The protein belongs to the adenylate kinase family. In terms of assembly, monomer.

Its subcellular location is the cytoplasm. It catalyses the reaction AMP + ATP = 2 ADP. It participates in purine metabolism; AMP biosynthesis via salvage pathway; AMP from ADP: step 1/1. Catalyzes the reversible transfer of the terminal phosphate group between ATP and AMP. Plays an important role in cellular energy homeostasis and in adenine nucleotide metabolism. The sequence is that of Adenylate kinase from Prochlorococcus marinus (strain NATL1A).